Here is a 563-residue protein sequence, read N- to C-terminus: Sulfite reductase [NADPH] hemoprotein beta-component (563 aa).

Positions 427, 433, 472, and 476 each coordinate [4Fe-4S] cluster. Cysteine 476 serves as a coordination point for siroheme.

It belongs to the nitrite and sulfite reductase 4Fe-4S domain family. As to quaternary structure, alpha(8)-beta(8). The alpha component is a flavoprotein, the beta component is a hemoprotein. Siroheme serves as cofactor. The cofactor is [4Fe-4S] cluster.

The catalysed reaction is hydrogen sulfide + 3 NADP(+) + 3 H2O = sulfite + 3 NADPH + 4 H(+). It functions in the pathway sulfur metabolism; hydrogen sulfide biosynthesis; hydrogen sulfide from sulfite (NADPH route): step 1/1. Its function is as follows. Component of the sulfite reductase complex that catalyzes the 6-electron reduction of sulfite to sulfide. This is one of several activities required for the biosynthesis of L-cysteine from sulfate. The sequence is that of Sulfite reductase [NADPH] hemoprotein beta-component from Shewanella frigidimarina (strain NCIMB 400).